A 2161-amino-acid chain; its full sequence is DNA polymerase epsilon catalytic subunit A (2161 aa).

3 consecutive short sequence motifs (nuclear localization signal) follow at residues 5–12, 1137–1144, and 1239–1246; these read NRRRDRKD, HKKVREKD, and LKKRKWKV. Positions 2038, 2041, 2063, and 2068 each coordinate Zn(2+). Residues 2038 to 2068 form a CysA-type zinc finger; the sequence is CSNCDAYRDLDICRDPALLTEKEWSCADTQC. [4Fe-4S] cluster-binding residues include cysteine 2099, cysteine 2102, cysteine 2114, and cysteine 2116. The CysB motif motif lies at 2099-2116; the sequence is CIRCNQVKAAHLTEQCEC. Positions 2130-2137 match the Nuclear localization signal 4 motif; sequence SKRMEIFM.

The protein belongs to the DNA polymerase type-B family. In terms of assembly, heterotetramer. Subunit of the DNA polymerase II. Interacts (via C-terminus) with DPB2. Interacts with LHP1/TFL2. [4Fe-4S] cluster is required as a cofactor. As to expression, mostly expressed at low levels in inflorescence (floral meristem and flowers until anthesis), and, to a lower extent, in roots, seeds and leaves.

Its subcellular location is the nucleus. The catalysed reaction is DNA(n) + a 2'-deoxyribonucleoside 5'-triphosphate = DNA(n+1) + diphosphate. DNA polymerase II, which participates in chromosomal DNA replication. Required for the timing and determination of cell fate during plant embryogenesis and root pole development, by promoting cell cycle and cell type patterning. Necessary for proper shoot (SAM) and root apical meristem (RAM) functions. Involved in maintaining epigenetic states, controlling hypersensitive response (HR), and mediating abscisic acid (ABA) signaling. Required for flowering repression through a mechanism involving epigenetic gene silencing. May participate in processes involved in chromatin-mediated cellular memory. The sequence is that of DNA polymerase epsilon catalytic subunit A (POL2A) from Arabidopsis thaliana (Mouse-ear cress).